We begin with the raw amino-acid sequence, 701 residues long: Elongation factor G (701 aa).

The region spanning 8–291 (SRYRNIGIVA…AVIDYLPAPV (284 aa)) is the tr-type G domain. Residues 17-24 (AHVDAGKT), 89-93 (DTPGH), and 143-146 (NKMD) contribute to the GTP site.

It belongs to the TRAFAC class translation factor GTPase superfamily. Classic translation factor GTPase family. EF-G/EF-2 subfamily.

It localises to the cytoplasm. Functionally, catalyzes the GTP-dependent ribosomal translocation step during translation elongation. During this step, the ribosome changes from the pre-translocational (PRE) to the post-translocational (POST) state as the newly formed A-site-bound peptidyl-tRNA and P-site-bound deacylated tRNA move to the P and E sites, respectively. Catalyzes the coordinated movement of the two tRNA molecules, the mRNA and conformational changes in the ribosome. This Pseudomonas fluorescens (strain SBW25) protein is Elongation factor G.